We begin with the raw amino-acid sequence, 495 residues long: L-arabinose isomerase (495 aa).

Positions 305, 332, 349, and 448 each coordinate Mn(2+).

This sequence belongs to the arabinose isomerase family. Mn(2+) serves as cofactor.

The enzyme catalyses beta-L-arabinopyranose = L-ribulose. Its pathway is carbohydrate degradation; L-arabinose degradation via L-ribulose; D-xylulose 5-phosphate from L-arabinose (bacterial route): step 1/3. Functionally, catalyzes the conversion of L-arabinose to L-ribulose. The chain is L-arabinose isomerase from Mannheimia succiniciproducens (strain KCTC 0769BP / MBEL55E).